Reading from the N-terminus, the 272-residue chain is Transformer-2 sex-determining protein (272 aa).

2 disordered regions span residues 21–102 (KHKC…DHPQ) and 182–272 (ITQR…QSRY). Low complexity predominate over residues 26–41 (HSSATSSPSSAASSES). A compositionally biased stretch (basic and acidic residues) spans 87 to 102 (TSRDRQRMRQARDHPQ). Residues 105-183 (RCIGVFGLNT…RRIRVDYSIT (79 aa)) form the RRM domain. The segment at 184 to 204 (QRAHTPTPGVYMGRPSRPLGR) is linker. A compositionally biased stretch (basic and acidic residues) spans 205-218 (RSRERDYSTRDTSR). The segment covering 238-266 (RKYRSRHRYDRSRSRTRSYSRSRSPRKPV) has biased composition (basic residues).

It belongs to the splicing factor SR family. Post-translationally, extensively phosphorylated on serine residues in the RS domain.

Required for female sex determination in somatic cells and for spermatogenesis in male germ cells. Positive regulator of female-specific splicing and/or polyadenylation of doublesex (dsx) pre-mRNA. Splicing requires an enhancer complex, dsxRE (dsx repeat element: which contains six copies of a 13-nucleotide repeat and a purine-rich enhancer (PRE)). DsxRE is formed through cooperative interactions between tra, tra2 and the sr proteins, and these interactions require both the repeat sequences and PRE. PRE is required for specific binding of tra2 to the dsxRE. Protein-RNA and protein-protein interactions are involved in tra-2 dependent activation and repression of alternative splicing. This Drosophila virilis (Fruit fly) protein is Transformer-2 sex-determining protein (tra2).